The sequence spans 57 residues: uncharacterized protein (57 aa).

A helical membrane pass occupies residues 34-54; that stretch reads AALLDAAALVVIPGLLTAAAV.

The protein resides in the membrane. This is an uncharacterized protein from Dictyostelium discoideum (Social amoeba).